We begin with the raw amino-acid sequence, 119 residues long: NLYQFKNMIQCTVPSRSWWDFADYGCYCGKGGSGTPVDDLDRCCQVHDNCYNEAEKISGCWPYFKTYSYECSQGTLTCKGGNNACAAAVCDCDRLAAICFAGAPYTDANYNIDLKARCQ.

Cystine bridges form between Cys-11–Cys-71, Cys-26–Cys-118, Cys-28–Cys-44, Cys-43–Cys-99, Cys-50–Cys-92, Cys-60–Cys-85, and Cys-78–Cys-90. The Ca(2+) site is built by Tyr-27, Gly-29, and Gly-31. Residue His-47 is part of the active site. Asp-48 serves as a coordination point for Ca(2+). Residue Asp-93 is part of the active site.

The protein belongs to the phospholipase A2 family. Group I subfamily. D49 sub-subfamily. It depends on Ca(2+) as a cofactor. In terms of tissue distribution, expressed by the venom gland.

The protein localises to the secreted. It catalyses the reaction a 1,2-diacyl-sn-glycero-3-phosphocholine + H2O = a 1-acyl-sn-glycero-3-phosphocholine + a fatty acid + H(+). Its function is as follows. Snake venom phospholipase A2 (PLA2) that has an effectively inhibitory effect on A-type K(+) currents (Kv/KCN) in acutely dissociated rat dorsal root ganglion (DRG) neurons. This inhibitory effect is independent of its enzymatic activity. PLA2 catalyzes the calcium-dependent hydrolysis of the 2-acyl groups in 3-sn-phosphoglycerides. The chain is Acidic phospholipase A2 natratoxin from Naja atra (Chinese cobra).